The following is a 182-amino-acid chain: ATP synthase subunit delta (182 aa).

Belongs to the ATPase delta chain family. In terms of assembly, F-type ATPases have 2 components, F(1) - the catalytic core - and F(0) - the membrane proton channel. F(1) has five subunits: alpha(3), beta(3), gamma(1), delta(1), epsilon(1). F(0) has three main subunits: a(1), b(2) and c(10-14). The alpha and beta chains form an alternating ring which encloses part of the gamma chain. F(1) is attached to F(0) by a central stalk formed by the gamma and epsilon chains, while a peripheral stalk is formed by the delta and b chains.

The protein resides in the cell inner membrane. Its function is as follows. F(1)F(0) ATP synthase produces ATP from ADP in the presence of a proton or sodium gradient. F-type ATPases consist of two structural domains, F(1) containing the extramembraneous catalytic core and F(0) containing the membrane proton channel, linked together by a central stalk and a peripheral stalk. During catalysis, ATP synthesis in the catalytic domain of F(1) is coupled via a rotary mechanism of the central stalk subunits to proton translocation. This protein is part of the stalk that links CF(0) to CF(1). It either transmits conformational changes from CF(0) to CF(1) or is implicated in proton conduction. This is ATP synthase subunit delta from Cytophaga hutchinsonii (strain ATCC 33406 / DSM 1761 / CIP 103989 / NBRC 15051 / NCIMB 9469 / D465).